A 224-amino-acid polypeptide reads, in one-letter code: 7-cyano-7-deazaguanine synthase (224 aa).

Position 10 to 20 (10 to 20 (LSGGLDSATVV)) interacts with ATP. Residues C189, C199, C202, and C205 each coordinate Zn(2+).

The protein belongs to the QueC family. It depends on Zn(2+) as a cofactor.

It catalyses the reaction 7-carboxy-7-deazaguanine + NH4(+) + ATP = 7-cyano-7-deazaguanine + ADP + phosphate + H2O + H(+). The protein operates within purine metabolism; 7-cyano-7-deazaguanine biosynthesis. Its function is as follows. Catalyzes the ATP-dependent conversion of 7-carboxy-7-deazaguanine (CDG) to 7-cyano-7-deazaguanine (preQ(0)). The protein is 7-cyano-7-deazaguanine synthase of Pseudomonas paraeruginosa (strain DSM 24068 / PA7) (Pseudomonas aeruginosa (strain PA7)).